The following is a 267-amino-acid chain: Small ribosomal subunit protein uS3 (267 aa).

One can recognise a KH type-2 domain in the interval 43 to 111 (IRKEMSKDLE…QVQLNIFEVK (69 aa)). A disordered region spans residues 216 to 267 (FEEQQAQQNNRPGRRGGDRRPRRGNRSAAPQAAEAPKAEAPAEAAPAAETKE). The span at 241 to 267 (RSAAPQAAEAPKAEAPAEAAPAAETKE) shows a compositional bias: low complexity.

Belongs to the universal ribosomal protein uS3 family. Part of the 30S ribosomal subunit. Forms a tight complex with proteins S10 and S14.

Its function is as follows. Binds the lower part of the 30S subunit head. Binds mRNA in the 70S ribosome, positioning it for translation. This is Small ribosomal subunit protein uS3 from Bifidobacterium longum subsp. infantis (strain ATCC 15697 / DSM 20088 / JCM 1222 / NCTC 11817 / S12).